A 178-amino-acid chain; its full sequence is Putative peroxiredoxin in rubredoxin operon (178 aa).

In terms of domain architecture, Thioredoxin spans 3–163; it reads RLVGKPAPEF…TLRVLKAFQT (161 aa). The active-site Cysteine sulfenic acid (-SOH) intermediate is Cys-50.

This sequence belongs to the peroxiredoxin family. AhpC/Prx1 subfamily. In terms of assembly, homodimer; disulfide-linked, upon oxidation.

The protein resides in the cytoplasm. It carries out the reaction a hydroperoxide + [protein]-dithiol = [protein]-disulfide + an alcohol + H2O. Its function is as follows. Thiol-specific peroxidase that catalyzes the reduction of hydrogen peroxide and organic hydroperoxides to water and alcohols, respectively. Plays a role in cell protection against oxidative stress by detoxifying peroxides. In Clostridium pasteurianum, this protein is Putative peroxiredoxin in rubredoxin operon.